Here is a 348-residue protein sequence, read N- to C-terminus: Sorbitol dehydrogenase (348 aa).

Zn(2+) is bound by residues Cys-40, His-65, and Glu-66. Residues Ile-179, Asp-199, Arg-204, 269–271 (VGI), and 293–295 (SFR) contribute to the NAD(+) site. Residue Arg-295 participates in substrate binding.

Belongs to the zinc-containing alcohol dehydrogenase family. Homotetramer. Requires Zn(2+) as cofactor.

It catalyses the reaction xylitol + NAD(+) = D-xylulose + NADH + H(+). The catalysed reaction is L-iditol + NAD(+) = keto-L-sorbose + NADH + H(+). The enzyme catalyses keto-D-fructose + NADH + H(+) = D-sorbitol + NAD(+). Functionally, polyol dehydrogenase that catalyzes the reversible NAD(+)-dependent oxidation of various sugar alcohols. Is active with xylitol, L-iditol and D-sorbitol (D-glucitol) as substrates, leading to the C2-oxidized products D-xylulose, L-sorbose and D-fructose, respectively. Is a key enzyme in the polyol pathway that interconverts glucose and fructose via sorbitol, which constitutes an important alternate route for glucose metabolism. The polypeptide is Sorbitol dehydrogenase (SDH) (Bombyx mori (Silk moth)).